Reading from the N-terminus, the 609-residue chain is Alpha-fetoprotein (609 aa).

The signal sequence occupies residues 1 to 18 (MKWVESIFLIFLLNFTES). 3 Albumin domains span residues 19–210 (RTLH…ATVT), 211–402 (KELR…EELQ), and 403–601 (KYIQ…KLIS). Cu(2+) is bound at residue His22. Residue Asn42 is glycosylated (N-linked (GlcNAc...) asparagine). 8 cysteine pairs are disulfide-bonded: Cys99–Cys114, Cys113–Cys124, Cys148–Cys193, Cys192–Cys201, Cys224–Cys270, Cys269–Cys277, Cys289–Cys303, and Cys302–Cys313. Phosphoserine occurs at positions 111, 115, and 117. Asn251 carries N-linked (GlcNAc...) asparagine glycosylation. The residue at position 344 (Ser344) is a Phosphoserine. 7 disulfide bridges follow: Cys384/Cys393, Cys416/Cys462, Cys461/Cys472, Cys485/Cys501, Cys500/Cys511, Cys538/Cys583, and Cys582/Cys591. At Ser444 the chain carries Phosphoserine.

The protein belongs to the ALB/AFP/VDB family. As to quaternary structure, dimeric and trimeric forms have been found in addition to the monomeric form. In terms of tissue distribution, plasma. Synthesized by the fetal liver and yolk sac.

Its subcellular location is the secreted. In terms of biological role, binds copper, nickel, and fatty acids as well as, and bilirubin less well than, serum albumin. This Pan troglodytes (Chimpanzee) protein is Alpha-fetoprotein (AFP).